Consider the following 178-residue polypeptide: MSRIGNKVVVLPAGVEIKQDGNNITVKGPKGELTREFSSDIKMNIEGNEVTFIRPNDSKEMKTIHGTTRANFNNMVVGVSEGFQKALELIGVGYRAQVQGNKLTLNVGYSHPVEMTAPEGVTFEVPANTQVIVKGINKEVVGELAANIRGVRPPEPYKGKGIRYVGEFVRRKEGKTGK.

The protein belongs to the universal ribosomal protein uL6 family. In terms of assembly, part of the 50S ribosomal subunit.

In terms of biological role, this protein binds to the 23S rRNA, and is important in its secondary structure. It is located near the subunit interface in the base of the L7/L12 stalk, and near the tRNA binding site of the peptidyltransferase center. The protein is Large ribosomal subunit protein uL6 of Enterococcus faecalis (strain ATCC 700802 / V583).